We begin with the raw amino-acid sequence, 257 residues long: NAD-capped RNA hydrolase NudC (257 aa).

Positions 25 and 69 each coordinate substrate. Residues Cys98 and Cys101 each contribute to the Zn(2+) site. Residue Glu111 participates in substrate binding. Positions 116 and 119 each coordinate Zn(2+). Tyr124 contacts substrate. The Nudix hydrolase domain maps to 125 to 248 (PQIAPCIIVA…TVARRLIEDT (124 aa)). A divalent metal cation contacts are provided by Ala158, Glu174, and Glu178. The Nudix box signature appears at 159–180 (GFVEVGETLEQAVAREVMEESG). Position 192–199 (192–199 (QPWPFPQS)) interacts with substrate. Glu219 is a binding site for a divalent metal cation. Residue Ala241 coordinates substrate.

It belongs to the Nudix hydrolase family. NudC subfamily. As to quaternary structure, homodimer. Mg(2+) serves as cofactor. Requires Mn(2+) as cofactor. The cofactor is Zn(2+).

It carries out the reaction a 5'-end NAD(+)-phospho-ribonucleoside in mRNA + H2O = a 5'-end phospho-adenosine-phospho-ribonucleoside in mRNA + beta-nicotinamide D-ribonucleotide + 2 H(+). The catalysed reaction is NAD(+) + H2O = beta-nicotinamide D-ribonucleotide + AMP + 2 H(+). The enzyme catalyses NADH + H2O = reduced beta-nicotinamide D-ribonucleotide + AMP + 2 H(+). MRNA decapping enzyme that specifically removes the nicotinamide adenine dinucleotide (NAD) cap from a subset of mRNAs by hydrolyzing the diphosphate linkage to produce nicotinamide mononucleotide (NMN) and 5' monophosphate mRNA. The NAD-cap is present at the 5'-end of some mRNAs and stabilizes RNA against 5'-processing. Has preference for mRNAs with a 5'-end purine. Catalyzes the hydrolysis of a broad range of dinucleotide pyrophosphates. This is NAD-capped RNA hydrolase NudC from Shigella boydii serotype 18 (strain CDC 3083-94 / BS512).